The primary structure comprises 277 residues: Diaminopimelate epimerase (277 aa).

N13, Q46, and N66 together coordinate substrate. Residue C75 is the Proton donor of the active site. Residues G76–N77, N160, N193, and E211–R212 each bind substrate. The active-site Proton acceptor is the C220. Position 221–222 (G221–S222) interacts with substrate.

It belongs to the diaminopimelate epimerase family. As to quaternary structure, homodimer.

It localises to the cytoplasm. It catalyses the reaction (2S,6S)-2,6-diaminopimelate = meso-2,6-diaminopimelate. It functions in the pathway amino-acid biosynthesis; L-lysine biosynthesis via DAP pathway; DL-2,6-diaminopimelate from LL-2,6-diaminopimelate: step 1/1. In terms of biological role, catalyzes the stereoinversion of LL-2,6-diaminopimelate (L,L-DAP) to meso-diaminopimelate (meso-DAP), a precursor of L-lysine and an essential component of the bacterial peptidoglycan. In Legionella pneumophila (strain Corby), this protein is Diaminopimelate epimerase.